Consider the following 177-residue polypeptide: Nucleoside triphosphate/diphosphate phosphatase (177 aa).

Arg-23 (proton donor) is an active-site residue. Mg(2+) is bound by residues Asn-87, Asp-103, Asp-105, Asp-107, Asp-120, and Glu-123.

The protein belongs to the Ntdp family. Requires Mg(2+) as cofactor.

It catalyses the reaction a ribonucleoside 5'-triphosphate + H2O = a ribonucleoside 5'-diphosphate + phosphate + H(+). The catalysed reaction is a ribonucleoside 5'-diphosphate + H2O = a ribonucleoside 5'-phosphate + phosphate + H(+). Has nucleoside phosphatase activity towards nucleoside triphosphates and nucleoside diphosphates. The polypeptide is Nucleoside triphosphate/diphosphate phosphatase (Streptococcus sanguinis (strain SK36)).